Consider the following 381-residue polypeptide: L-lactate dehydrogenase A-like 6B (381 aa).

NAD(+) contacts are provided by residues 101–106 and arginine 148; that span reads DLDEDK. Residues arginine 155, asparagine 187, and arginine 218 each coordinate substrate. Asparagine 187 contacts NAD(+). Histidine 242 serves as the catalytic Proton acceptor. Threonine 297 provides a ligand contact to substrate.

This sequence belongs to the LDH/MDH superfamily. LDH family. Testis specific.

It catalyses the reaction (S)-lactate + NAD(+) = pyruvate + NADH + H(+). The protein operates within fermentation; pyruvate fermentation to lactate; (S)-lactate from pyruvate: step 1/1. The chain is L-lactate dehydrogenase A-like 6B (LDHAL6B) from Homo sapiens (Human).